A 248-amino-acid chain; its full sequence is DNA polymerase sliding clamp (248 aa).

The protein belongs to the PCNA family. As to quaternary structure, homotrimer. The subunits circularize to form a toroid; DNA passes through its center. Replication factor C (RFC) is required to load the toroid on the DNA.

Its function is as follows. Sliding clamp subunit that acts as a moving platform for DNA processing. Responsible for tethering the catalytic subunit of DNA polymerase and other proteins to DNA during high-speed replication. This is DNA polymerase sliding clamp from Cenarchaeum symbiosum (strain A).